Reading from the N-terminus, the 504-residue chain is Putative pentatricopeptide repeat-containing protein At3g28640 (504 aa).

PPR repeat units follow at residues 77–107 (NSFV…MVKE), 115–149 (SYLT…GVFL), 151–181 (DSHV…IPQP), 182–216 (DVVK…GLEP), 217–251 (DEFS…SWIE), 253–287 (DVFV…NVFS), 288–319 (WAAL…GIKP), 320–350 (DSVV…MEAR), and 356–390 (KHEH…PLAS). The type E motif stretch occupies residues 391–470 (VWGALLNGCR…TPGWSVLEVD (80 aa)). The tract at residues 471–501 (GNVTKFVSGDVSHPNLLQIHTVIHLLSVDAL) is type E(+) motif.

This sequence belongs to the PPR family. PCMP-E subfamily.

The polypeptide is Putative pentatricopeptide repeat-containing protein At3g28640 (PCMP-E79) (Arabidopsis thaliana (Mouse-ear cress)).